The sequence spans 504 residues: Deoxyguanosinetriphosphate triphosphohydrolase (504 aa).

In terms of domain architecture, HD spans 66–273 (RLTHSMEVQQ…MEAADDISYC (208 aa)).

It belongs to the dGTPase family. Type 1 subfamily. As to quaternary structure, homotetramer. The cofactor is Mg(2+).

The catalysed reaction is dGTP + H2O = 2'-deoxyguanosine + triphosphate + H(+). DGTPase preferentially hydrolyzes dGTP over the other canonical NTPs. The chain is Deoxyguanosinetriphosphate triphosphohydrolase from Citrobacter koseri (strain ATCC BAA-895 / CDC 4225-83 / SGSC4696).